The primary structure comprises 422 residues: MVTIVLGSQWGDEGKGKITDYLSQDATLCCRAAGGHNAGHTIVHDSVTYDFHILPSGLVSPKCINLIGAGTVVHIPSFFKELGALAEKGLVDADKRIFISDRAHVCFDLHSVVDGLEEAKLGGRKVGTTGKGIGPCYSDKAARRGVRVGEILDEEVFERKLRNLHSGYRNRFGELAYDVEEEINRFKEYRQKLKPYIIDQLPFLQKYKNDDRILVEGANALLLDLDHGTYPYVTSSSTGLGGAIQGLSINPTKIKNIIGVVKAYTTRVGSGPFPTEQLNEFGEKLQVTGREFGVTTGRKRRCGWFDLVLCRYSLAVNHYTALNLTKLDILDDFDEIKVAVAYKLPDGTRLESSYPADAGVIEKLEVEYVTLPGWKSNTMGLTKYEDLPENARKYVEYIEKGLDGVPIKWIGTGPAREHLIIR.

Residues 11–17 (GDEGKGK) and 39–41 (GHT) contribute to the GTP site. Asp12 (proton acceptor) is an active-site residue. Residues Asp12 and Gly39 each coordinate Mg(2+). IMP contacts are provided by residues 12 to 15 (DEGK), 37 to 40 (NAGH), Thr129, Arg143, Asn219, Thr234, and Arg298. His40 serves as the catalytic Proton donor. 294–300 (VTTGRKR) contacts substrate. GTP-binding positions include Arg300, 326 to 328 (KLD), and 411 to 413 (GTG).

It belongs to the adenylosuccinate synthetase family. In terms of assembly, homodimer. Mg(2+) is required as a cofactor.

Its subcellular location is the cytoplasm. It carries out the reaction IMP + L-aspartate + GTP = N(6)-(1,2-dicarboxyethyl)-AMP + GDP + phosphate + 2 H(+). The protein operates within purine metabolism; AMP biosynthesis via de novo pathway; AMP from IMP: step 1/2. Functionally, plays an important role in the de novo pathway and in the salvage pathway of purine nucleotide biosynthesis. Catalyzes the first committed step in the biosynthesis of AMP from IMP. The protein is Adenylosuccinate synthetase of Talaromyces marneffei (strain ATCC 18224 / CBS 334.59 / QM 7333) (Penicillium marneffei).